A 603-amino-acid polypeptide reads, in one-letter code: DNA mismatch repair protein MutL (603 aa).

Belongs to the DNA mismatch repair MutL/HexB family.

Its function is as follows. This protein is involved in the repair of mismatches in DNA. It is required for dam-dependent methyl-directed DNA mismatch repair. May act as a 'molecular matchmaker', a protein that promotes the formation of a stable complex between two or more DNA-binding proteins in an ATP-dependent manner without itself being part of a final effector complex. In Rhodopseudomonas palustris (strain BisA53), this protein is DNA mismatch repair protein MutL.